A 138-amino-acid polypeptide reads, in one-letter code: Basic phospholipase A2 homolog G6K49 (138 aa).

The first 16 residues, 1–16 (MRTLWIMAVLLLGVEG), serve as a signal peptide directing secretion. 7 disulfide bridges follow: Cys42–Cys132, Cys44–Cys60, Cys59–Cys112, Cys65–Cys138, Cys66–Cys105, Cys73–Cys98, and Cys91–Cys103. Positions 122-133 (KKHRVTVKFLCK) are important for membrane-damaging activities in eukaryotes and bacteria; heparin-binding.

This sequence belongs to the phospholipase A2 family. Group II subfamily. K49 sub-subfamily. As to quaternary structure, homodimer; non-covalently linked. As to expression, expressed by the venom gland.

It is found in the secreted. In terms of biological role, snake venom phospholipase A2 (PLA2) that lacks enzymatic activity. Displays myotoxic activities. A model of myotoxic mechanism has been proposed: an apo Lys49-PLA2 is activated by the entrance of a hydrophobic molecule (e.g. fatty acid) at the hydrophobic channel of the protein leading to a reorientation of a monomer. This reorientation causes a transition between 'inactive' to 'active' states, causing alignment of C-terminal and membrane-docking sites (MDoS) side-by-side and putting the membrane-disruption sites (MDiS) in the same plane, exposed to solvent and in a symmetric position for both monomers. The MDoS region stabilizes the toxin on membrane by the interaction of charged residues with phospholipid head groups. Subsequently, the MDiS region destabilizes the membrane with penetration of hydrophobic residues. This insertion causes a disorganization of the membrane, allowing an uncontrolled influx of ions (i.e. calcium and sodium), and eventually triggering irreversible intracellular alterations and cell death. In Calloselasma rhodostoma (Malayan pit viper), this protein is Basic phospholipase A2 homolog G6K49.